The chain runs to 538 residues: Frizzled-4 (538 aa).

An N-terminal signal peptide occupies residues Met-1 to Gly-37. At Phe-38–Ser-213 the chain is on the extracellular side. One can recognise an FZ domain in the interval Glu-41–Gly-162. Cystine bridges form between Cys-46/Cys-107, Cys-54/Cys-100, Cys-91/Cys-129, Cys-118/Cys-159, Cys-122/Cys-146, Cys-182/Cys-201, Cys-205/Cys-283, and Cys-303/Cys-378. Asn-60 carries an N-linked (GlcNAc...) asparagine glycan. Asn-145 carries an N-linked (GlcNAc...) asparagine glycan. A helical membrane pass occupies residues Arg-214 to Ile-244. Topologically, residues Asp-245–Ser-250 are cytoplasmic. A helical membrane pass occupies residues Tyr-251–Val-276. Residues Gly-277–Asn-300 lie on the Extracellular side of the membrane. Residues Thr-301 to Leu-334 traverse the membrane as a helical segment. Over Lys-335–Gly-337 the chain is Cytoplasmic. The chain crosses the membrane as a helical span at residues His-338 to Met-366. The Extracellular portion of the chain corresponds to Arg-367–Ser-384. N-linked (GlcNAc...) asparagine glycosylation occurs at Asn-382. Residues Leu-385–Ser-419 traverse the membrane as a helical segment. The Cytoplasmic portion of the chain corresponds to Asn-420–Glu-432. Residues Arg-433–Ser-461 form a helical membrane-spanning segment. Topologically, residues Asn-462–Asn-474 are extracellular. Residues Met-475 to Ile-496 traverse the membrane as a helical segment. At Trp-497–Val-538 the chain is on the cytoplasmic side. The short motif at Lys-500–Trp-505 is the Lys-Thr-X-X-X-Trp motif, mediates interaction with the PDZ domain of Dvl family members element. A PDZ-binding motif is present at residues Thr-536–Val-538.

Belongs to the G-protein coupled receptor Fz/Smo family. Interacts with MAGI3 and NDP. Component of a complex, at least composed of TSPAN12, FZD4 and norrin (NDP). Interacts (via FZ domain) with TSKU; TSKU competes with WNT2B for binding to FZD4, inhibiting Wnt signaling and repressing peripheral eye development. Interacts with glypican GPC3. In terms of processing, ubiquitinated by ZNRF3, leading to its degradation by the proteasome.

It is found in the cell membrane. Functionally, receptor for Wnt proteins. Most of frizzled receptors are coupled to the beta-catenin (CTNNB1) canonical signaling pathway, which leads to the activation of disheveled proteins, inhibition of GSK-3 kinase, nuclear accumulation of beta-catenin (CTNNB1) and activation of Wnt target genes. Plays a critical role in retinal vascularization by acting as a receptor for Wnt proteins and norrin (NDP). In retina, it can be both activated by Wnt protein-binding, but also by a Wnt-independent signaling via binding of norrin (NDP), promoting in both cases beta-catenin (CTNNB1) accumulation and stimulation of LEF/TCF-mediated transcriptional programs. A second signaling pathway involving PKC and calcium fluxes has been seen for some family members, but it is not yet clear if it represents a distinct pathway or if it can be integrated in the canonical pathway, as PKC seems to be required for Wnt-mediated inactivation of GSK-3 kinase. Both pathways seem to involve interactions with G-proteins. May be involved in transduction and intercellular transmission of polarity information during tissue morphogenesis and/or in differentiated tissues. The protein is Frizzled-4 (Fzd4) of Rattus norvegicus (Rat).